The chain runs to 72 residues: Translation initiation factor IF-1 (72 aa).

In terms of domain architecture, S1-like spans 1–72; it reads MSKNDVIEVE…TRGRIVYRFK (72 aa).

This sequence belongs to the IF-1 family. Component of the 30S ribosomal translation pre-initiation complex which assembles on the 30S ribosome in the order IF-2 and IF-3, IF-1 and N-formylmethionyl-tRNA(fMet); mRNA recruitment can occur at any time during PIC assembly.

Its subcellular location is the cytoplasm. One of the essential components for the initiation of protein synthesis. Stabilizes the binding of IF-2 and IF-3 on the 30S subunit to which N-formylmethionyl-tRNA(fMet) subsequently binds. Helps modulate mRNA selection, yielding the 30S pre-initiation complex (PIC). Upon addition of the 50S ribosomal subunit IF-1, IF-2 and IF-3 are released leaving the mature 70S translation initiation complex. This chain is Translation initiation factor IF-1, found in Desulforamulus reducens (strain ATCC BAA-1160 / DSM 100696 / MI-1) (Desulfotomaculum reducens).